A 285-amino-acid polypeptide reads, in one-letter code: Probable fructose-bisphosphate aldolase (285 aa).

Serine 50 contributes to the D-glyceraldehyde 3-phosphate binding site. The active-site Proton donor is aspartate 85. Zn(2+)-binding residues include histidine 86, aspartate 107, glutamate 137, and histidine 181. Residue glycine 182 participates in dihydroxyacetone phosphate binding. A Zn(2+)-binding site is contributed by histidine 209. Dihydroxyacetone phosphate contacts are provided by residues 210–212 (GGT) and 231–234 (NVNT). Threonine 212 and threonine 234 each carry phosphothreonine.

The protein belongs to the class II fructose-bisphosphate aldolase family. Requires Zn(2+) as cofactor. Post-translationally, phosphorylated during sporulation.

It catalyses the reaction beta-D-fructose 1,6-bisphosphate = D-glyceraldehyde 3-phosphate + dihydroxyacetone phosphate. It participates in carbohydrate degradation; glycolysis; D-glyceraldehyde 3-phosphate and glycerone phosphate from D-glucose: step 4/4. In terms of biological role, catalyzes the aldol condensation of dihydroxyacetone phosphate (DHAP or glycerone-phosphate) with glyceraldehyde 3-phosphate (G3P) to form fructose 1,6-bisphosphate (FBP) in gluconeogenesis and the reverse reaction in glycolysis. The polypeptide is Probable fructose-bisphosphate aldolase (fbaA) (Bacillus subtilis (strain 168)).